Here is a 359-residue protein sequence, read N- to C-terminus: Mitochondrial glutathione transporter SLC25A39 (359 aa).

At 1-14 the chain is on the mitochondrial intermembrane side; sequence MDDQDPGGISPLQQ. Solcar repeat units follow at residues 9-151, 159-243, and 253-347; these read ISPL…LKAF, SDLY…VKSW, and TSVG…GKSF. A helical membrane pass occupies residues 15-35; sequence MVASGAGAVVTSLFMTPLDVV. At 36-121 the chain is on the mitochondrial matrix side; sequence KVRLQSQRPS…VKIVRHEGTR (86 aa). The [2Fe-2S] cluster site is built by Cys-74, Cys-78, Cys-88, and Cys-94. A helical membrane pass occupies residues 122-142; it reads TLWSGLPATLVMTVPATAIYF. The Mitochondrial intermembrane segment spans residues 143-164; sequence TAYDQLKAFLCGQSLTSDLYAP. The helical transmembrane segment at 165–185 threads the bilayer; sequence MVAGALARMGTVTVVSPLELV. Residues 186–214 lie on the Mitochondrial matrix side of the membrane; it reads RTKLQAQHVSYRELASSVQAAVTQGGWRS. Residues 215–235 form a helical membrane-spanning segment; it reads LWLGWGPTALRDVPFSALYWF. The Mitochondrial intermembrane segment spans residues 236-255; it reads NYELVKSWLSGLRPKDQTSV. The chain crosses the membrane as a helical span at residues 256–276; it reads GISFVAGGISGMVAATLTLPF. Topologically, residues 277-317 are mitochondrial matrix; it reads DVVKTQRQMSLGAVEAVRVKPPRVDSTWLLLRRIRAESGTR. Residues 318–338 traverse the membrane as a helical segment; sequence GLFAGFLPRIIKAAPSCAIMI. The Mitochondrial intermembrane portion of the chain corresponds to 339–359; the sequence is STYEFGKSFFQRLNQEQPLGR.

This sequence belongs to the mitochondrial carrier (TC 2.A.29) family. Post-translationally, cleaved and degraded by AFG3L2; degradation by AFG3L2 is regulated by the ability of SLC25A39 to bind iron-sulfur. In absence of mitochondrial glutathione, SLC25A39 binds iron-sulfur, preventing cleavage and degradation by AFG3L2. The presence of mitochondrial glutathione prevents iron-sulfur-binding to SLC25A39, promoting cleavage and degradation by AFG3L2. Abundant expression in bone marrow, spleen, testis and kidney.

It localises to the mitochondrion inner membrane. The catalysed reaction is glutathione(in) = glutathione(out). The activity of SLC25A39 is regulated by levels of mitochondrial glutathione via its ability to bind [2Fe-2S] iron-sulfur cluster. Upon physiological levels of mitochondrial glutathione, glutathione prevents iron-sulfur-binding to SLC25A39 promoting cleavage and degradation by AFG3L2. Upon depletion of mitochondrial glutathione, SLC25A39 binds iron-sulfur, preventing cleavage and degradation by AFG3L2. In terms of biological role, mitochondrial transporter required for glutathione import into mitochondria. Glutathione, which plays key roles in oxidative metabolism, is produced exclusively in the cytosol and is imported in many organelles. Mitochondrial glutathione is required for the activity and stability of proteins containing iron-sulfur clusters, as well as erythropoiesis. The chain is Mitochondrial glutathione transporter SLC25A39 from Mus musculus (Mouse).